Here is a 336-residue protein sequence, read N- to C-terminus: Isopentenyl-diphosphate delta-isomerase (336 aa).

Residue 5–6 (RK) participates in substrate binding. Residues 60–62 (AMT), serine 90, and asparagine 117 each bind FMN. Glutamine 147 serves as a coordination point for substrate. Glutamate 148 contributes to the Mg(2+) binding site. FMN-binding positions include lysine 179, serine 204, threonine 209, 253–255 (GVR), and 274–275 (SR).

It belongs to the IPP isomerase type 2 family. In terms of assembly, homooctamer. Dimer of tetramers. Requires FMN as cofactor. The cofactor is NADPH. Mg(2+) serves as cofactor.

The protein localises to the cytoplasm. The catalysed reaction is isopentenyl diphosphate = dimethylallyl diphosphate. Its function is as follows. Involved in the biosynthesis of isoprenoids. Catalyzes the 1,3-allylic rearrangement of the homoallylic substrate isopentenyl (IPP) to its allylic isomer, dimethylallyl diphosphate (DMAPP). This Streptococcus pneumoniae serotype 4 (strain ATCC BAA-334 / TIGR4) protein is Isopentenyl-diphosphate delta-isomerase.